A 147-amino-acid polypeptide reads, in one-letter code: uncharacterized protein (147 aa).

This is an uncharacterized protein from Homo sapiens (Human).